Reading from the N-terminus, the 433-residue chain is N-lysine methyltransferase SMYD2 (433 aa).

The SET domain maps to 7 to 241; the sequence is GGLERFCSPG…PGEEVFTSYI (235 aa). An S-adenosyl-L-methionine-binding site is contributed by 17–19; sequence KGR. Residues Cys-52, Cys-55, Cys-65, Cys-68, Cys-74, Cys-78, His-86, and Cys-90 each contribute to the Zn(2+) site. The segment at 52–90 adopts an MYND-type zinc-finger fold; that stretch reads CEFCFARKEGLSKCGRCKQAFYCNVECQREDWPMHKLEC. S-adenosyl-L-methionine is bound by residues His-137, 206–207, and 258–260; these read NH and YFF.

This sequence belongs to the class V-like SAM-binding methyltransferase superfamily. In terms of assembly, interacts with RNA polymerase II and HELZ. Interacts with SIN3A and HDAC1. Interacts (via MYND-type zinc finger) with EPB41L3. Interacts (via SET domain) with p53/TP53. Interacts with RB1 and HSP90AA1.

Its subcellular location is the cytoplasm. It is found in the cytosol. It localises to the nucleus. The enzyme catalyses L-lysyl(4)-[histone H3] + 3 S-adenosyl-L-methionine = N(6),N(6),N(6)-trimethyl-L-lysyl(4)-[histone H3] + 3 S-adenosyl-L-homocysteine + 3 H(+). It carries out the reaction L-lysyl-[protein] + S-adenosyl-L-methionine = N(6)-methyl-L-lysyl-[protein] + S-adenosyl-L-homocysteine + H(+). Protein-lysine N-methyltransferase that methylates both histones and non-histone proteins, including p53/TP53 and RB1. Specifically trimethylates histone H3 'Lys-4' (H3K4me3) in vivo. The activity requires interaction with HSP90alpha. Shows even higher methyltransferase activity on p53/TP53. Monomethylates 'Lys-370' of p53/TP53, leading to decreased DNA-binding activity and subsequent transcriptional regulation activity of p53/TP53. Monomethylates RB1 at 'Lys-860'. The sequence is that of N-lysine methyltransferase SMYD2 (SMYD2) from Bos taurus (Bovine).